The following is a 40-amino-acid chain: MKVRKSLRSLKNKPGAQVVRRHGKVFVINKKDPRFKARQG.

It belongs to the bacterial ribosomal protein bL36 family.

This Corynebacterium kroppenstedtii (strain DSM 44385 / JCM 11950 / CIP 105744 / CCUG 35717) protein is Large ribosomal subunit protein bL36.